We begin with the raw amino-acid sequence, 433 residues long: Adenylosuccinate synthetase (433 aa).

GTP is bound by residues 11–17 (GDEGKGK) and 39–41 (GHT). The Proton acceptor role is filled by aspartate 12. Residues aspartate 12 and glycine 39 each coordinate Mg(2+). IMP contacts are provided by residues 12–15 (DEGK), 37–40 (NAGH), threonine 134, arginine 148, asparagine 230, threonine 245, and arginine 309. Histidine 40 acts as the Proton donor in catalysis. Position 305-311 (305-311 (VTTGRKR)) interacts with substrate. Residues arginine 311, 337–339 (KLD), and 419–421 (GTG) contribute to the GTP site.

The protein belongs to the adenylosuccinate synthetase family. In terms of assembly, homodimer. The cofactor is Mg(2+).

It localises to the cytoplasm. It carries out the reaction IMP + L-aspartate + GTP = N(6)-(1,2-dicarboxyethyl)-AMP + GDP + phosphate + 2 H(+). Its pathway is purine metabolism; AMP biosynthesis via de novo pathway; AMP from IMP: step 1/2. Plays an important role in the de novo pathway and in the salvage pathway of purine nucleotide biosynthesis. Catalyzes the first committed step in the biosynthesis of AMP from IMP. This Saccharomyces cerevisiae (strain AWRI1631) (Baker's yeast) protein is Adenylosuccinate synthetase.